The primary structure comprises 100 residues: Small ribosomal subunit protein eS24 (100 aa).

It belongs to the eukaryotic ribosomal protein eS24 family.

This chain is Small ribosomal subunit protein eS24, found in Methanothermobacter thermautotrophicus (strain ATCC 29096 / DSM 1053 / JCM 10044 / NBRC 100330 / Delta H) (Methanobacterium thermoautotrophicum).